A 115-amino-acid polypeptide reads, in one-letter code: NADH-ubiquinone oxidoreductase chain 3 (115 aa).

3 helical membrane-spanning segments follow: residues 3–23 (LMLT…IAFW), 55–75 (FFLV…LLPL), and 86–106 (TMLT…AYEW).

The protein belongs to the complex I subunit 3 family. Core subunit of respiratory chain NADH dehydrogenase (Complex I) which is composed of 45 different subunits. Interacts with TMEM186. Interacts with TMEM242.

The protein resides in the mitochondrion inner membrane. The enzyme catalyses a ubiquinone + NADH + 5 H(+)(in) = a ubiquinol + NAD(+) + 4 H(+)(out). Its function is as follows. Core subunit of the mitochondrial membrane respiratory chain NADH dehydrogenase (Complex I) which catalyzes electron transfer from NADH through the respiratory chain, using ubiquinone as an electron acceptor. Essential for the catalytic activity of complex I. This Ceratotherium simum (White rhinoceros) protein is NADH-ubiquinone oxidoreductase chain 3.